A 150-amino-acid chain; its full sequence is Arginine repressor (150 aa).

This sequence belongs to the ArgR family.

It localises to the cytoplasm. It participates in amino-acid biosynthesis; L-arginine biosynthesis [regulation]. Regulates arginine biosynthesis genes. The chain is Arginine repressor from Desulfitobacterium hafniense (strain DSM 10664 / DCB-2).